A 433-amino-acid polypeptide reads, in one-letter code: MEPQLGPEAAALRPGWLALLLWVSALSCSFSLPASSLSSLVPQVRTSYNFGRTFLGLDKCNACIGTSICKKFFKEEIRSDNWLASHLGLPPDSLLSYPANYSDDSKIWRPVEIFRLVSKYQNEISDRRICASASAPKTCSIERVLRKTERFQKWLQAKRLTPDLVQGLASPLLRCPSQRLLDRVVRRYAEVADAGSIFMDHFTDRDKLRLLYTLAVNSHPILLQIFPGAEGWPLPKYLGSCGRFLVSTSTRPLQEFYDAPPDQAADLAYQLLGVLESLRSNDLNYFFYFTHIDAGMFGVFNNGHLFIRDASAVGVIDKQEGSQEANRAGENKDIFSCLVSGCQAQLPSCESISEKQSLVLVCQKLLPRLLQGRFPSPVQDDIDSILVQCGDSIRPDPEVLGAASQLKDILRPLRTCDSRFAYRYPDCKYNDKF.

Positions 1 to 31 are cleaved as a signal peptide; it reads MEPQLGPEAAALRPGWLALLLWVSALSCSFS. N-linked (GlcNAc...) asparagine glycosylation occurs at Asn-100.

The protein belongs to the DIPK family.

It is found in the secreted. In Homo sapiens (Human), this protein is Divergent protein kinase domain 2B.